Here is a 396-residue protein sequence, read N- to C-terminus: Elongation factor Tu 1 (396 aa).

The tr-type G domain maps to 10-206 (KPHCNIGTIG…TVDDYIPQPD (197 aa)). The tract at residues 19-26 (GHVDHGKT) is G1. 19–26 (GHVDHGKT) contacts GTP. Mg(2+) is bound at residue T26. Residues 60–64 (GITIN) form a G2 region. The interval 81–84 (DCPG) is G3. GTP-binding positions include 81 to 85 (DCPGH) and 136 to 139 (NKVD). The G4 stretch occupies residues 136-139 (NKVD). The interval 174 to 176 (SAK) is G5.

Belongs to the TRAFAC class translation factor GTPase superfamily. Classic translation factor GTPase family. EF-Tu/EF-1A subfamily. As to quaternary structure, monomer.

The protein localises to the cytoplasm. It catalyses the reaction GTP + H2O = GDP + phosphate + H(+). In terms of biological role, GTP hydrolase that promotes the GTP-dependent binding of aminoacyl-tRNA to the A-site of ribosomes during protein biosynthesis. This chain is Elongation factor Tu 1, found in Caulobacter sp. (strain K31).